Here is a 213-residue protein sequence, read N- to C-terminus: Nicolin-1 (213 aa).

Part of the neuronal tubulin polyglutamylase complex which contains TPGS1, TPGS2, TTLL1, LRRC49 and NICN1.

It localises to the nucleus. This is Nicolin-1 (NICN1) from Canis lupus familiaris (Dog).